The following is a 240-amino-acid chain: Orotidine 5'-phosphate decarboxylase (240 aa).

Residues D12, K34, 62–71 (DMKLFDIGNT), T117, R180, Q189, G209, and R210 contribute to the substrate site. The active-site Proton donor is the K64.

It belongs to the OMP decarboxylase family. Type 1 subfamily. Homodimer.

The enzyme catalyses orotidine 5'-phosphate + H(+) = UMP + CO2. It participates in pyrimidine metabolism; UMP biosynthesis via de novo pathway; UMP from orotate: step 2/2. In terms of biological role, catalyzes the decarboxylation of orotidine 5'-monophosphate (OMP) to uridine 5'-monophosphate (UMP). In Ruegeria pomeroyi (strain ATCC 700808 / DSM 15171 / DSS-3) (Silicibacter pomeroyi), this protein is Orotidine 5'-phosphate decarboxylase.